Consider the following 276-residue polypeptide: MEQLIRDEMRVLPTIDPHFEIERRVAFIKKKLVESGCKSLVLGISGGVDSTTCGRLAQVAVDQLNQESNSNDYQFVAVRLPYGEQKDEEEAQLALSFIQPTHSVSVNIKAGVDGLHAASHIALEGTGLIPQDAAKVDFVKGNVKARARMVAQYEIAGYVGGLVLGTDHSAENITGFYTKFGDGACDLAPLFGLSKRQVRLVAETLGAPELLVKKVPTADLEELAPQKADEDALNLTYEQIDDFLEGKPVSEAVSARLVSIYKATQHKRQPIPTIYD.

43-50 serves as a coordination point for ATP; it reads GISGGVDS. Residue aspartate 49 participates in Mg(2+) binding. Position 146 (arginine 146) interacts with deamido-NAD(+). Threonine 166 is an ATP binding site. Mg(2+) is bound at residue glutamate 171. Deamido-NAD(+)-binding residues include lysine 179 and aspartate 186. The ATP site is built by lysine 195 and threonine 217. Residue 266 to 267 participates in deamido-NAD(+) binding; the sequence is HK.

The protein belongs to the NAD synthetase family. As to quaternary structure, homodimer.

It carries out the reaction deamido-NAD(+) + NH4(+) + ATP = AMP + diphosphate + NAD(+) + H(+). It participates in cofactor biosynthesis; NAD(+) biosynthesis; NAD(+) from deamido-NAD(+) (ammonia route): step 1/1. Functionally, catalyzes the ATP-dependent amidation of deamido-NAD to form NAD. Uses ammonia as a nitrogen source. The chain is NH(3)-dependent NAD(+) synthetase from Vibrio vulnificus (strain CMCP6).